The primary structure comprises 98 residues: U-megalopygitoxin(1)-Mo1 (98 aa).

Positions 1-17 are cleaved as a signal peptide; sequence MYRETFVFCVLLAVVSA.

Belongs to the caterpillar 1 family. Contains 4 disulfide bonds. In terms of tissue distribution, expressed by the venom apparatus.

The protein localises to the secreted. Functionally, probable toxin. The protein is U-megalopygitoxin(1)-Mo1 of Megalopyge opercularis (Southern flannel moth).